The primary structure comprises 153 residues: 3-hydroxyacyl-[acyl-carrier-protein] dehydratase FabZ (153 aa).

Histidine 57 is a catalytic residue.

It belongs to the thioester dehydratase family. FabZ subfamily.

The protein resides in the cytoplasm. The enzyme catalyses a (3R)-hydroxyacyl-[ACP] = a (2E)-enoyl-[ACP] + H2O. Its function is as follows. Involved in unsaturated fatty acids biosynthesis. Catalyzes the dehydration of short chain beta-hydroxyacyl-ACPs and long chain saturated and unsaturated beta-hydroxyacyl-ACPs. This Vibrio cholerae serotype O1 (strain ATCC 39315 / El Tor Inaba N16961) protein is 3-hydroxyacyl-[acyl-carrier-protein] dehydratase FabZ.